Consider the following 140-residue polypeptide: Nucleoside diphosphate kinase (140 aa).

The ATP site is built by Lys11, Phe59, Arg87, Thr93, Arg104, and Asn114. His117 (pros-phosphohistidine intermediate) is an active-site residue.

This sequence belongs to the NDK family. In terms of assembly, homotetramer. It depends on Mg(2+) as a cofactor.

It localises to the cytoplasm. It carries out the reaction a 2'-deoxyribonucleoside 5'-diphosphate + ATP = a 2'-deoxyribonucleoside 5'-triphosphate + ADP. The enzyme catalyses a ribonucleoside 5'-diphosphate + ATP = a ribonucleoside 5'-triphosphate + ADP. Functionally, major role in the synthesis of nucleoside triphosphates other than ATP. The ATP gamma phosphate is transferred to the NDP beta phosphate via a ping-pong mechanism, using a phosphorylated active-site intermediate. This is Nucleoside diphosphate kinase from Rickettsia typhi (strain ATCC VR-144 / Wilmington).